A 121-amino-acid polypeptide reads, in one-letter code: Large ribosomal subunit protein bL12 (121 aa).

This sequence belongs to the bacterial ribosomal protein bL12 family. As to quaternary structure, homodimer. Part of the ribosomal stalk of the 50S ribosomal subunit. Forms a multimeric L10(L12)X complex, where L10 forms an elongated spine to which 2 to 4 L12 dimers bind in a sequential fashion. Binds GTP-bound translation factors.

In terms of biological role, forms part of the ribosomal stalk which helps the ribosome interact with GTP-bound translation factors. Is thus essential for accurate translation. The polypeptide is Large ribosomal subunit protein bL12 (Pseudomonas syringae pv. tomato (strain ATCC BAA-871 / DC3000)).